The sequence spans 515 residues: Fatty acyl-CoA reductase 1 (515 aa).

Topologically, residues 1–465 (MVSIPEYYEG…ARKHLNKLRN (465 aa)) are cytoplasmic. The tract at residues 451–507 (SGLPAARKHLNKLRNIRYGFNTILVILIWRIFIARSQMARNIWYFVVSLCYKFLSYF) is necessary and sufficient for PEX19-mediated localization into peroxisome membrane. A helical transmembrane segment spans residues 466–483 (IRYGFNTILVILIWRIFI). At 484-515 (ARSQMARNIWYFVVSLCYKFLSYFRASSTMRY) the chain is on the peroxisomal side.

Belongs to the fatty acyl-CoA reductase family. As to quaternary structure, interacts with PEX19; PEX19 mediates the targeting of FAR1 to peroxisomes.

It is found in the peroxisome membrane. It catalyses the reaction a long-chain fatty acyl-CoA + 2 NADPH + 2 H(+) = a long-chain primary fatty alcohol + 2 NADP(+) + CoA. It carries out the reaction hexadecanoyl-CoA + 2 NADPH + 2 H(+) = hexadecan-1-ol + 2 NADP(+) + CoA. The enzyme catalyses octadecanoyl-CoA + 2 NADPH + 2 H(+) = octadecan-1-ol + 2 NADP(+) + CoA. The catalysed reaction is (9Z)-octadecenoyl-CoA + 2 NADPH + 2 H(+) = (9Z)-octadecen-1-ol + 2 NADP(+) + CoA. It catalyses the reaction (9Z,12Z)-octadecadienoyl-CoA + 2 NADPH + 2 H(+) = (9Z,12Z)-octadecadien-1-ol + 2 NADP(+) + CoA. It carries out the reaction eicosanoyl-CoA + 2 NADPH + 2 H(+) = eicosan-1-ol + 2 NADP(+) + CoA. The enzyme catalyses 16-methylheptadecanoyl-CoA + 2 NADPH + 2 H(+) = 16-methylheptadecan-1-ol + 2 NADP(+) + CoA. The catalysed reaction is 18-methylnonadecanoyl-CoA + 2 NADPH + 2 H(+) = 18-methylnonadecan-1-ol + 2 NADP(+) + CoA. In terms of biological role, catalyzes the reduction of saturated and unsaturated C16 or C18 fatty acyl-CoA to fatty alcohols. It plays an essential role in the production of ether lipids/plasmalogens which synthesis requires fatty alcohols. In parallel, it is also required for wax monoesters production since fatty alcohols also constitute a substrate for their synthesis. Its function is as follows. Catalyzes the reduction of saturated and unsaturated C16 or C18 fatty acyl-CoA to fatty alcohols. It plays an essential role in the production of ether lipids/plasmalogens which synthesis requires fatty alcohols. In parallel, it is also required for wax monoesters production since fatty alcohols also constitute a substrate for their synthesis. In Rattus norvegicus (Rat), this protein is Fatty acyl-CoA reductase 1.